The following is a 518-amino-acid chain: Cytochrome P450 monooxygenase pyr3 (518 aa).

Residues 26 to 46 form a helical membrane-spanning segment; the sequence is GVAIVLFLAPLALHLVSSYLF. Residue Cys-458 participates in heme binding.

This sequence belongs to the cytochrome P450 family. Requires heme as cofactor.

It localises to the membrane. Its pathway is secondary metabolite biosynthesis; terpenoid biosynthesis. In terms of biological role, cytochrome P450 monooxygenase; part of the gene cluster that mediates the biosynthesis of pyripyropene A, a specific human acyl-coenzyme A:cholesterol acyltransferase 2 inhibitor. The first step of the pathway is the synthesis of nicotinyl-CoA from nicotinic acid by the nicotinic acid-CoA ligase pyr1. Nicotinyl-CoA is then a substrate of polyketide synthase pyr2 to produce 4-hydroxy-6-(3-pyridinyl)-2H-pyran-2-one (HPPO) which is further prenylated by the polyprenyl transferase pyr6 to yield farnesyl-HPPO. The next steps consist of an epoxidation of farnesyl-HPPO to epoxyfarnesyl-HPPO by FAD-dependent monooxygenase pyr5 and a cyclization of the terpenoid portion by the terpene cyclase pyr4 to yield deacetyl-pyripyropene E. The 2 cytochrome P450 monooxygenases pyr3 and pyr9, and the 2 acetyltransferases pyr7 and pyr8 are involved in the conversion of deacetyl-pyripyropene E into pyripyropene A through several cycles of oxidation and acetylation steps. Pyr7 acetylates deacetyl-pyripyropene E to pyripyropene E which is oxidized to 11-deacetyl-pyripyropene O by pyr3, which is in turn acetylated into pyripyropene O by pyr8. Pyripyropene O is then oxidized to deacetyl-pyripyropene A by pyr9. Deacetyl-pyripyropene A is finally acetylated to pyripyropene A by pyr8. The protein is Cytochrome P450 monooxygenase pyr3 of Aspergillus fumigatus (strain ATCC MYA-4609 / CBS 101355 / FGSC A1100 / Af293) (Neosartorya fumigata).